Here is a 433-residue protein sequence, read N- to C-terminus: GTPase Obg (433 aa).

The 159-residue stretch at 4-162 folds into the Obg domain; sequence EDFVDRVTIF…RWLELELKLL (159 aa). The 172-residue stretch at 163 to 334 folds into the OBG-type G domain; sequence ADAGLIGFPN…LKQKIFEIVG (172 aa). Residues 169–176, 194–198, 216–219, 286–289, and 315–317 contribute to the GTP site; these read GFPNVGKS, FTTLV, DIPG, NKID, and SAL. Positions 176 and 196 each coordinate Mg(2+). The OCT domain maps to 356 to 433; the sequence is TKIEERFDFE…IGQYSFEYKE (78 aa).

This sequence belongs to the TRAFAC class OBG-HflX-like GTPase superfamily. OBG GTPase family. Monomer. Mg(2+) is required as a cofactor.

It is found in the cytoplasm. Functionally, an essential GTPase which binds GTP, GDP and possibly (p)ppGpp with moderate affinity, with high nucleotide exchange rates and a fairly low GTP hydrolysis rate. Plays a role in control of the cell cycle, stress response, ribosome biogenesis and in those bacteria that undergo differentiation, in morphogenesis control. This chain is GTPase Obg, found in Pseudothermotoga lettingae (strain ATCC BAA-301 / DSM 14385 / NBRC 107922 / TMO) (Thermotoga lettingae).